Consider the following 343-residue polypeptide: MSITKNDKNTRTTGRPTLNEVARRAGVSPITASRALRGVASVAEELAQKVRDAARELGYVANPAARALASAQSHSVAVLVPSLANLLFIETLEAIHAVLRPQGLEVLIGNFHYSRNEEEDLIRNYLAYQPRGLLLTGFERTESARRMIEASGIPCVYMMDLDSGSGLNCVGFSQLRAGEAAAEHLLARGRRRLAYIGAQLDQRTLLRGEGFRRALQKAGCYDPGLEILTPRPSSVALGGELFVQLLASQPQVDGVFFCNDDLAQGALLEALRRGVKVPEQIAVLGFNDLPGSDCTVPRLSSIRTPREAIGRRAAEQLLALIAGKEVRDSALDMGFELMAREST.

Residues 16-70 (PTLNEVARRAGVSPITASRALRGVASVAEELAQKVRDAARELGYVANPAARALAS) enclose the HTH lacI-type domain. Residues 18-37 (LNEVARRAGVSPITASRALR) constitute a DNA-binding region (H-T-H motif).

With respect to regulation, free GntR fails to recognize gluconate and 6-phosphogluconate, whereas the GntR/DNA complexes recognize both ligands. It is therefore likely that GntR DNA binding induces structural changes that permit GntR to recognize effectors. Functionally, involved in the regulation of glucose metabolism. Represses its own expression as well as that of the gluconate permease GntP. It employs an effector mediated de-repression mechanism: in the absence of ligand, GntR binds to the gntR and gntP promoters and represses their expression. The release of promoter bound GntR is induced by gluconate and 6-phosphogluconate that bind with similar apparent affinities to the GntR/DNA complex. The release of GntR leads to transcription of the genes. The polypeptide is HTH-type transcriptional regulator GntR (Pseudomonas aeruginosa (strain ATCC 15692 / DSM 22644 / CIP 104116 / JCM 14847 / LMG 12228 / 1C / PRS 101 / PAO1)).